Reading from the N-terminus, the 254-residue chain is Nickel import ATP-binding protein NikD (254 aa).

The ABC transporter domain maps to 2–241 (PQQIELRNIA…PKHAVTRSLV (240 aa)). Residue 36-43 (GGSGSGKS) coordinates ATP.

It belongs to the ABC transporter superfamily. Nickel importer (TC 3.A.1.5.3) family. The complex is composed of two ATP-binding proteins (NikD and NikE), two transmembrane proteins (NikB and NikC) and a solute-binding protein (NikA).

The protein resides in the cell inner membrane. It catalyses the reaction Ni(2+)(out) + ATP + H2O = Ni(2+)(in) + ADP + phosphate + H(+). Functionally, part of the ABC transporter complex NikABCDE involved in nickel import. Responsible for energy coupling to the transport system. The chain is Nickel import ATP-binding protein NikD from Shigella sonnei (strain Ss046).